The primary structure comprises 276 residues: Aldo-keto reductase Mjls_1919 (276 aa).

The Proton donor role is filled by tyrosine 50. Leucine 190, isoleucine 228, lysine 230, serine 231, valine 232, arginine 236, serine 239, and asparagine 240 together coordinate NADPH.

The protein belongs to the aldo/keto reductase family.

The protein is Aldo-keto reductase Mjls_1919 of Mycobacterium sp. (strain JLS).